We begin with the raw amino-acid sequence, 397 residues long: Probable sugar efflux transporter (397 aa).

Transmembrane regions (helical) follow at residues 15 to 35 (VVTL…PVGL), 51 to 71 (GIML…FMLL), 81 to 101 (LICL…AWSF), 103 to 123 (VLVI…SITA), 136 to 156 (AQAL…GLPV), 170 to 190 (FLAI…LLPL), 209 to 229 (PALM…YTAY), 246 to 266 (FATV…VIFG), 273 to 293 (ASVL…LLMP), 301 to 321 (LAIL…GMQV), 333 to 353 (VAMS…ALVG), and 364 to 384 (DIGY…VIIF).

The protein belongs to the major facilitator superfamily. SotB (TC 2.A.1.2) family.

Its subcellular location is the cell inner membrane. Functionally, involved in the efflux of sugars. The physiological role may be the reduction of the intracellular concentration of toxic sugars or sugar metabolites. The protein is Probable sugar efflux transporter of Escherichia fergusonii (strain ATCC 35469 / DSM 13698 / CCUG 18766 / IAM 14443 / JCM 21226 / LMG 7866 / NBRC 102419 / NCTC 12128 / CDC 0568-73).